The primary structure comprises 190 residues: UPF0301 protein Rpic_0619 (190 aa).

It belongs to the UPF0301 (AlgH) family.

This Ralstonia pickettii (strain 12J) protein is UPF0301 protein Rpic_0619.